Consider the following 512-residue polypeptide: tRNA-2-methylthio-N(6)-dimethylallyladenosine synthase (512 aa).

Residues 17-133 form the MTTase N-terminal domain; sequence RTYEVRTFGC…LPTLLERSAH (117 aa). Positions 26, 62, 96, 170, 174, and 177 each coordinate [4Fe-4S] cluster. The region spanning 156 to 392 is the Radical SAM core domain; it reads RESAYAGWVS…LALQERISEE (237 aa). The 67-residue stretch at 395-461 folds into the TRAM domain; it reads RKLIGTTQEL…PHFLIADGGV (67 aa). The interval 473–512 is disordered; sequence TELGETPTTAPVGVGLGMPSIKKPEPTTAGGCSTGGCGCE.

The protein belongs to the methylthiotransferase family. MiaB subfamily. Monomer. Requires [4Fe-4S] cluster as cofactor.

It is found in the cytoplasm. It carries out the reaction N(6)-dimethylallyladenosine(37) in tRNA + (sulfur carrier)-SH + AH2 + 2 S-adenosyl-L-methionine = 2-methylsulfanyl-N(6)-dimethylallyladenosine(37) in tRNA + (sulfur carrier)-H + 5'-deoxyadenosine + L-methionine + A + S-adenosyl-L-homocysteine + 2 H(+). Its function is as follows. Catalyzes the methylthiolation of N6-(dimethylallyl)adenosine (i(6)A), leading to the formation of 2-methylthio-N6-(dimethylallyl)adenosine (ms(2)i(6)A) at position 37 in tRNAs that read codons beginning with uridine. The protein is tRNA-2-methylthio-N(6)-dimethylallyladenosine synthase of Corynebacterium jeikeium (strain K411).